The chain runs to 173 residues: Disulfide bond formation protein B (173 aa).

Over 1-14 the chain is Cytoplasmic; the sequence is MIEFLRRIAAHRLA. A helical membrane pass occupies residues 15 to 31; that stretch reads WGLLAASALFLELSALF. The Periplasmic portion of the chain corresponds to 32 to 49; the sequence is FQYVLGLHPCVMCVYERL. Cys41 and Cys44 are joined by a disulfide. Residues 50-65 form a helical membrane-spanning segment; sequence AILGVLSAGLLGMVAP. Residues 66 to 72 are Cytoplasmic-facing; it reads EKWYLRW. Residues 73-90 form a helical membrane-spanning segment; that stretch reads SALLLWGYSAFRGLQLAL. Over 91–145 the chain is Periplasmic; that stretch reads KHVDYQMNPSPFNVCSPFADFPSWAPLDQWLPWLFFPDGDCSEISWQFLSFSMPQ. Cys105 and Cys131 are oxidised to a cystine. Residues 146–164 form a helical membrane-spanning segment; it reads WLVAIFAAYLLVFVVVTIG. Topologically, residues 165 to 173 are cytoplasmic; sequence NLVKGRCCS.

Belongs to the DsbB family.

Its subcellular location is the cell inner membrane. In terms of biological role, required for disulfide bond formation in some periplasmic proteins. Acts by oxidizing the DsbA protein. This is Disulfide bond formation protein B from Aeromonas salmonicida (strain A449).